Consider the following 581-residue polypeptide: Arginine--tRNA ligase (581 aa).

The 'HIGH' region motif lies at 126 to 136; sequence PNLAKEMHVGH.

It belongs to the class-I aminoacyl-tRNA synthetase family. Monomer.

It is found in the cytoplasm. The catalysed reaction is tRNA(Arg) + L-arginine + ATP = L-arginyl-tRNA(Arg) + AMP + diphosphate. The protein is Arginine--tRNA ligase of Shewanella sediminis (strain HAW-EB3).